The sequence spans 98 residues: Large ribosomal subunit protein uL23 (98 aa).

This sequence belongs to the universal ribosomal protein uL23 family. In terms of assembly, part of the 50S ribosomal subunit. Contacts protein L29, and trigger factor when it is bound to the ribosome.

Its function is as follows. One of the early assembly proteins it binds 23S rRNA. One of the proteins that surrounds the polypeptide exit tunnel on the outside of the ribosome. Forms the main docking site for trigger factor binding to the ribosome. This chain is Large ribosomal subunit protein uL23, found in Frankia alni (strain DSM 45986 / CECT 9034 / ACN14a).